Consider the following 337-residue polypeptide: ATP-dependent 6-phosphofructokinase (337 aa).

An ATP-binding site is contributed by glycine 11. Position 21–25 (21–25 (RAVVR)) interacts with ADP. Residues 72–73 (RY) and 102–105 (GDGS) contribute to the ATP site. Aspartate 103 is a binding site for Mg(2+). Substrate is bound at residue 125-127 (TID). Residue aspartate 127 is the Proton acceptor of the active site. Arginine 154 contacts ADP. Substrate-binding positions include arginine 162 and 169–171 (MGR). Residues 185–187 (GAD) and 214–216 (KNH) contribute to the ADP site. Substrate is bound by residues glutamate 223, arginine 245, and 251-254 (HILR).

It belongs to the phosphofructokinase type A (PFKA) family. ATP-dependent PFK group I subfamily. Prokaryotic clade 'B1' sub-subfamily. Homotetramer. Requires Mg(2+) as cofactor.

Its subcellular location is the cytoplasm. It carries out the reaction beta-D-fructose 6-phosphate + ATP = beta-D-fructose 1,6-bisphosphate + ADP + H(+). It participates in carbohydrate degradation; glycolysis; D-glyceraldehyde 3-phosphate and glycerone phosphate from D-glucose: step 3/4. With respect to regulation, allosterically activated by ADP and other diphosphonucleosides, and allosterically inhibited by phosphoenolpyruvate. Functionally, catalyzes the phosphorylation of D-fructose 6-phosphate to fructose 1,6-bisphosphate by ATP, the first committing step of glycolysis. The protein is ATP-dependent 6-phosphofructokinase of Streptococcus mutans serotype c (strain ATCC 700610 / UA159).